We begin with the raw amino-acid sequence, 490 residues long: Metal cation symporter ZIP14 (490 aa).

The first 28 residues, 1–28, serve as a signal peptide directing secretion; that stretch reads MELLRPALPSYFLLTLLSIWTAASEARA. Residues 29 to 155 lie on the Extracellular side of the membrane; the sequence is VSTGMPTISA…PSSVEVWGYG (127 aa). N75, N85, and N100 each carry an N-linked (GlcNAc...) asparagine glycan. The segment at 127 to 146 is disordered; sequence ACSSENQENEENEQTEEGRP. The helical transmembrane segment at 156 to 176 threads the bilayer; sequence LLCVTVISLCSLLGASVVPFM. At 177–184 the chain is on the cytoplasmic side; the sequence is KKTFYKRL. Residues 185–205 form a helical membrane-spanning segment; that stretch reads LLYFIALAIGTLYSNALFQLI. At 206-222 the chain is on the extracellular side; that stretch reads PEAFGFNPMEDYYVSKS. Residues 223–243 form a helical membrane-spanning segment; sequence AVVFGGFYLFFFTEKILKMLL. Over 244 to 395 the chain is Cytoplasmic; sequence KQKNEHHHGH…LLNAGMSLQQ (152 aa). An HHHGHXHX-motif motif is present at residues 249–256; that stretch reads HHHGHSHY. The XEXPHE-motif motif lies at 374 to 379; the sequence is EEFPHE. The chain crosses the membrane as a helical span at residues 396-416; sequence ALFFNFLSACCCYVGLGFGIL. The Extracellular portion of the chain corresponds to 417–422; the sequence is AGSHFS. Residues 423–443 form a helical membrane-spanning segment; it reads ANWIFALAGGMFLYISLADMF. Topologically, residues 444–459 are cytoplasmic; that stretch reads PEMNEVSQEDERKGSA. The helical transmembrane segment at 460–480 threads the bilayer; the sequence is LIPFVIQNLGLLTGFGIMLVL. Topologically, residues 481–490 are extracellular; that stretch reads TMYSGHIQIG.

Belongs to the ZIP transporter (TC 2.A.5) family. Homotrimer. Post-translationally, ubiquitinated. Ubiquitination occurs upon iron depletion. The ubiquitinated form undergoes proteasomal degradation. In terms of processing, N-glycosylated. N-glycosylation at Asn-100 is required for iron-regulated extraction of the transporter from membranes and subsequent proteasomal degradation.

It is found in the cell membrane. Its subcellular location is the apical cell membrane. The protein resides in the basolateral cell membrane. It localises to the early endosome membrane. The protein localises to the late endosome membrane. It is found in the lysosome membrane. The enzyme catalyses Zn(2+)(out) + 2 hydrogencarbonate(out) = Zn(2+)(in) + 2 hydrogencarbonate(in). It catalyses the reaction Mn(2+)(out) + 2 hydrogencarbonate(out) = Mn(2+)(in) + 2 hydrogencarbonate(in). It carries out the reaction Fe(2+)(out) + 2 hydrogencarbonate(out) = Fe(2+)(in) + 2 hydrogencarbonate(in). The catalysed reaction is Cd(2+)(out) + 2 hydrogencarbonate(out) = Cd(2+)(in) + 2 hydrogencarbonate(in). In terms of biological role, electroneutral transporter of the plasma membrane mediating the cellular uptake of the divalent metal cations zinc, manganese and iron that are important for tissue homeostasis, metabolism, development and immunity. Functions as an energy-dependent symporter, transporting through the membranes an electroneutral complex composed of a divalent metal cation and two bicarbonate anions. Beside these endogenous cellular substrates, can also import cadmium a non-essential metal which is cytotoxic and carcinogenic. This is Metal cation symporter ZIP14 from Bos taurus (Bovine).